We begin with the raw amino-acid sequence, 494 residues long: Uric acid degradation bifunctional protein PucL (494 aa).

An OHCU decarboxylase region spans residues 1–174 (MFTMDDLNQM…EKGETQMKRT (174 aa)). Catalysis depends on His-68, which acts as the Proton donor; for OHCU decarboxylase activity. 5-hydroxy-2-oxo-4-ureido-2,5-dihydro-1H-imidazole-5-carboxylate contacts are provided by residues Pro-69, 81–85 (SVREQ), and 116–120 (FILAV). Residues 175 to 494 (MSYGKGNVFA…AAEKCRSLKA (320 aa)) are urate oxidase. Lys-179 acts as the Charge relay system; for urate oxidase activity in catalysis. Lys-190 acts as the Charge relay system in catalysis. Residue Thr-239 is the Charge relay system; for urate oxidase activity of the active site. 7 residues coordinate urate: Thr-239, Asp-240, Phe-349, Arg-366, Ile-414, Gln-415, and Asn-441.

The protein in the N-terminal section; belongs to the OHCU decarboxylase family. In the C-terminal section; belongs to the uricase family.

The enzyme catalyses 5-hydroxy-2-oxo-4-ureido-2,5-dihydro-1H-imidazole-5-carboxylate + H(+) = (S)-allantoin + CO2. The catalysed reaction is urate + O2 + H2O = 5-hydroxyisourate + H2O2. The protein operates within purine metabolism; urate degradation; (S)-allantoin from urate: step 1/3. Its pathway is purine metabolism; urate degradation; (S)-allantoin from urate: step 3/3. Functionally, catalyzes two steps in the degradation of uric acid, i.e. the oxidation of uric acid to 5-hydroxyisourate (HIU) and the stereoselective decarboxylation of 2-oxo-4-hydroxy-4-carboxy-5-ureidoimidazoline (OHCU) to (S)-allantoin. The sequence is that of Uric acid degradation bifunctional protein PucL (pucL) from Bacillus subtilis (strain 168).